A 528-amino-acid chain; its full sequence is GMP synthase [glutamine-hydrolyzing] (528 aa).

The region spanning 13–204 is the Glutamine amidotransferase type-1 domain; it reads AIVILDFGSQ…VYDICSCEPD (192 aa). Catalysis depends on Cys-90, which acts as the Nucleophile. Catalysis depends on residues His-178 and Glu-180. One can recognise a GMPS ATP-PPase domain in the interval 205 to 403; the sequence is WTTNLFIDEA…LGLPDEIVRR (199 aa). 232-238 lines the ATP pocket; it reads SGGVDSS.

As to quaternary structure, homodimer.

The catalysed reaction is XMP + L-glutamine + ATP + H2O = GMP + L-glutamate + AMP + diphosphate + 2 H(+). Its pathway is purine metabolism; GMP biosynthesis; GMP from XMP (L-Gln route): step 1/1. Catalyzes the synthesis of GMP from XMP. This Prochlorococcus marinus (strain NATL2A) protein is GMP synthase [glutamine-hydrolyzing].